Reading from the N-terminus, the 359-residue chain is Protein RecA (359 aa).

Position 73-80 (73-80 (GPESSGKT)) interacts with ATP.

It belongs to the RecA family.

Its subcellular location is the cytoplasm. In terms of biological role, can catalyze the hydrolysis of ATP in the presence of single-stranded DNA, the ATP-dependent uptake of single-stranded DNA by duplex DNA, and the ATP-dependent hybridization of homologous single-stranded DNAs. It interacts with LexA causing its activation and leading to its autocatalytic cleavage. The chain is Protein RecA from Desulfovibrio desulfuricans (strain ATCC 27774 / DSM 6949 / MB).